The chain runs to 324 residues: DnaJ homolog subfamily B member 2 (324 aa).

The residue at position 2 (A2) is an N-acetylalanine. One can recognise a J domain in the interval 2 to 71 (ASYYEILDVP…REIYDRYGRE (70 aa)). Disordered stretches follow at residues 70–90 (REGLTGTGTGPSRAEAGSGGP) and 218–324 (LSRR…CLIL). UIM domains follow at residues 210–226 (DDLALGLELSRREQQPS) and 250–269 (SEDEDLQLAMAYSLSEMEAA). Residues 224–241 (QPSVTSRSGGTQVQQTPA) show a composition bias toward polar residues. Positions 280 to 289 (QHRRQGRPKA) are enriched in basic residues. The span at 303–324 (ARGEATKRSPSPEEKASRCLIL) shows a compositional bias: basic and acidic residues. Residue S311 is modified to Phosphoserine. C321 is subject to Cysteine methyl ester. C321 carries the S-geranylgeranyl cysteine lipid modification. A CAAX motif motif is present at residues 321-324 (CLIL). The propeptide at 322 to 324 (LIL) is removed in mature form.

In terms of assembly, interacts with HSP70 (HSPA1A or HSPA1B). Interacts with HSPA8/Hsc70. Interacts with PSMA3 and most probably with the whole proteasomal complex. Post-translationally, ubiquitinated by STUB1; does not lead to proteasomal degradation. In terms of tissue distribution, more abundantly expressed in neocortex, cerebellum, spinal cord and retina where it is expressed by neuronal cells (at protein level). Detected at much lower level in non-neuronal tissues including kidney, lung, heart, skeletal muscle, spleen and testis (at protein level). Isoform 1 is more abundant in neocortex and cerebellum compared to isoform 2 (at protein level).

It is found in the cytoplasm. It localises to the nucleus. Its subcellular location is the endoplasmic reticulum membrane. Its function is as follows. Functions as a co-chaperone, regulating the substrate binding and activating the ATPase activity of chaperones of the HSP70/heat shock protein 70 family. In parallel, also contributes to the ubiquitin-dependent proteasomal degradation of misfolded proteins. Thereby, may regulate the aggregation and promote the functional recovery of misfolded proteins like HTT, MC4R, PRKN, RHO and SOD1 and be crucial for many biological processes. Isoform 1 which is localized to the endoplasmic reticulum membranes may specifically function in ER-associated protein degradation of misfolded proteins. The protein is DnaJ homolog subfamily B member 2 of Homo sapiens (Human).